The primary structure comprises 102 residues: Small ribosomal subunit protein uS17 (102 aa).

Residues 1–15 (MTDETASQEASQSTD) show a composition bias toward polar residues. Residues 1-20 (MTDETASQEASQSTDAAAPA) form a disordered region.

This sequence belongs to the universal ribosomal protein uS17 family. As to quaternary structure, part of the 30S ribosomal subunit.

Its function is as follows. One of the primary rRNA binding proteins, it binds specifically to the 5'-end of 16S ribosomal RNA. This is Small ribosomal subunit protein uS17 from Frankia casuarinae (strain DSM 45818 / CECT 9043 / HFP020203 / CcI3).